Here is a 1201-residue protein sequence, read N- to C-terminus: HEAT repeat-containing protein 6 (1201 aa).

Residues 1 to 25 are disordered; it reads MAGKVTFLGSNSSFSPDGKTQGFKS. An HEAT 1 repeat occupies 182 to 221; the sequence is PDLLGPSGVLVKYGDPKQPDIELRRSAVHCIANLCLSVPS. A disordered region spans residues 321 to 390; sequence AVKPEPAQDT…SQSSMLTSPS (70 aa). The span at 341-352 shows a compositional bias: basic residues; that stretch reads QKKRKSRGKGKK. The segment covering 375 to 390 has biased composition (polar residues); the sequence is SGWSHGSQSSMLTSPS. HEAT repeat units lie at residues 460–498, 523–560, and 566–603; these read GIGGPPPLTLLTIALKDPLPKVRAGSLQVLSALLEGSRQ, SIRELHRGLLLALIAESSCQTLTQVLKCLAHLVSNVPY, and GLLSPLWKQIRPYVRHRDVNVRVSSLTLFGALVSTQAP. Residues 618 to 633 are compositionally biased toward polar residues; sequence SSLGSGISTPQESPLS. Positions 618 to 653 are disordered; sequence SSLGSGISTPQESPLSWRQPARRDEEASSPAAAEGP.

This is HEAT repeat-containing protein 6 (heatr6) from Danio rerio (Zebrafish).